Consider the following 174-residue polypeptide: Crossover junction endodeoxyribonuclease RuvC (174 aa).

Catalysis depends on residues D8, E67, and D139. The Mg(2+) site is built by D8, E67, and D139.

The protein belongs to the RuvC family. As to quaternary structure, homodimer which binds Holliday junction (HJ) DNA. The HJ becomes 2-fold symmetrical on binding to RuvC with unstacked arms; it has a different conformation from HJ DNA in complex with RuvA. In the full resolvosome a probable DNA-RuvA(4)-RuvB(12)-RuvC(2) complex forms which resolves the HJ. The cofactor is Mg(2+).

The protein localises to the cytoplasm. It catalyses the reaction Endonucleolytic cleavage at a junction such as a reciprocal single-stranded crossover between two homologous DNA duplexes (Holliday junction).. The RuvA-RuvB-RuvC complex processes Holliday junction (HJ) DNA during genetic recombination and DNA repair. Endonuclease that resolves HJ intermediates. Cleaves cruciform DNA by making single-stranded nicks across the HJ at symmetrical positions within the homologous arms, yielding a 5'-phosphate and a 3'-hydroxyl group; requires a central core of homology in the junction. The consensus cleavage sequence is 5'-(A/T)TT(C/G)-3'. Cleavage occurs on the 3'-side of the TT dinucleotide at the point of strand exchange. HJ branch migration catalyzed by RuvA-RuvB allows RuvC to scan DNA until it finds its consensus sequence, where it cleaves and resolves the cruciform DNA. This is Crossover junction endodeoxyribonuclease RuvC from Pseudomonas entomophila (strain L48).